The sequence spans 104 residues: Protein RnfH (104 aa).

Belongs to the UPF0125 (RnfH) family.

This is Protein RnfH from Pseudomonas fluorescens (strain Pf0-1).